We begin with the raw amino-acid sequence, 721 residues long: Cytosolic carboxypeptidase 2 (721 aa).

The tract at residues 43–71 is disordered; sequence TASDMINSSSPSESSDSNLEEEQEESKPC. Residues 50-59 show a composition bias toward low complexity; sequence SSSPSESSDS. The region spanning 334-605 is the Peptidase M14 domain; it reads YPYTYSKLQH…CFCDTLLDFC (272 aa). Positions 400, 403, and 496 each coordinate Zn(2+). E569 serves as the catalytic Proton donor/acceptor. Residues 645 to 721 are disordered; sequence DIESSTSGSN…TQHGDTEDQS (77 aa). Residues 647 to 660 are compositionally biased toward low complexity; it reads ESSTSGSNSTESDG. Basic residues predominate over residues 672 to 688; the sequence is GKKKLLRSRKERNRLRQ. The segment covering 703–714 has biased composition (polar residues); the sequence is YSCQTLNATTQH.

The protein belongs to the peptidase M14 family. Zn(2+) serves as cofactor.

The protein localises to the cytoplasm. Its subcellular location is the cytosol. The protein resides in the cytoskeleton. It localises to the microtubule organizing center. It is found in the centrosome. The protein localises to the centriole. Its subcellular location is the cilium basal body. The enzyme catalyses (L-glutamyl)(n+1)-gamma-L-glutamyl-L-glutamyl-[protein] + H2O = (L-glutamyl)(n)-gamma-L-glutamyl-L-glutamyl-[protein] + L-glutamate. In terms of biological role, metallocarboxypeptidase that mediates deglutamylation of target proteins. Catalyzes the deglutamylation of polyglutamate side chains generated by post-translational polyglutamylation in proteins such as tubulins. Also removes gene-encoded polyglutamates from the carboxy-terminus of target proteins such as MYLK. Does not show detyrosinase or deglycylase activities from the carboxy-terminus of tubulin. Metallocarboxypeptidase that mediates deglutamylation of tubulin and non-tubulin target proteins. Catalyzes the removal of polyglutamate side chains present on the gamma-carboxyl group of glutamate residues within the C-terminal tail of tubulin protein. Specifically cleaves tubulin long-side-chains, while it is not able to remove the branching point glutamate. Also catalyzes the removal of polyglutamate residues from the carboxy-terminus of non-tubulin proteins. This is Cytosolic carboxypeptidase 2 (zte25) from Danio rerio (Zebrafish).